The following is a 276-amino-acid chain: Large ribosomal subunit protein uL2 (276 aa).

Disordered regions lie at residues leucine 34–glycine 55 and arginine 221–lysine 276. Residues leucine 37–arginine 48 are compositionally biased toward polar residues.

It belongs to the universal ribosomal protein uL2 family. In terms of assembly, part of the 50S ribosomal subunit. Forms a bridge to the 30S subunit in the 70S ribosome.

Functionally, one of the primary rRNA binding proteins. Required for association of the 30S and 50S subunits to form the 70S ribosome, for tRNA binding and peptide bond formation. It has been suggested to have peptidyltransferase activity; this is somewhat controversial. Makes several contacts with the 16S rRNA in the 70S ribosome. The chain is Large ribosomal subunit protein uL2 from Enterococcus faecalis (strain ATCC 700802 / V583).